Reading from the N-terminus, the 314-residue chain is MEKPFGFVVIDKPSGLTSHDCVNRLRKVFGIKKIGHSGTLDPAVTGVLPIAIGDATRLISYLQGSKAYRGIIQLGATTNTDDMQGEIIESKAWPLITQNYINYLLENFRGEILQKPPIFSSVHIKGERAYKKARKGEKFDLIPKKVTINKLNLISWSQDKGELLVDVDCSTGTYIRSLARDIGDKIGCGGYLKSLRRTKAYNFIENHSVKLPEKSDFYPEGDKPKVLNPNIFFKHLSSFELISEEEIISWRSGRKISFQNNVKRLKVTKNNEVEDSFIHNNHILVLNKENKILGIACLDDSFAIKPKVVFNAIG.

Catalysis depends on D41, which acts as the Nucleophile.

Belongs to the pseudouridine synthase TruB family. Type 1 subfamily.

It carries out the reaction uridine(55) in tRNA = pseudouridine(55) in tRNA. Responsible for synthesis of pseudouridine from uracil-55 in the psi GC loop of transfer RNAs. This chain is tRNA pseudouridine synthase B, found in Prochlorococcus marinus (strain NATL2A).